The sequence spans 317 residues: Melanocyte-stimulating hormone receptor (317 aa).

Topologically, residues 1 to 37 are extracellular; that stretch reads MPMQGAQRKLLGSLNSTPTATSNLGLAANHTGAPCLE. N-linked (GlcNAc...) asparagine glycosylation is present at asparagine 29. Residues 38–63 traverse the membrane as a helical segment; it reads VSIPDGLFLSLGLVSLVENVLVVAAV. Topologically, residues 64 to 72 are cytoplasmic; sequence AKNRNLHSS. The helical transmembrane segment at 73–93 threads the bilayer; it reads MYCFICCLALSDLLVSGSNML. Topologically, residues 94–118 are extracellular; that stretch reads ETAVILLLETGALATRTSVVQQLHN. The helical transmembrane segment at 119–140 threads the bilayer; sequence TINVLTCSSMLCSLCFLGAIAV. Residues 141 to 163 are Cytoplasmic-facing; that stretch reads DRYISIFYALRYHSIMTLPRAQR. The helical transmembrane segment at 164 to 183 threads the bilayer; it reads AIAAIWVASVLSSTLFITYY. Topologically, residues 184–191 are extracellular; that stretch reads DHAAVLLC. A helical transmembrane segment spans residues 192 to 211; the sequence is LVVFFLAMLVLMAVLYVHML. Over 212-240 the chain is Cytoplasmic; it reads ARACQHAHGIIRLHKRQTPAHQGFGLRGA. A helical membrane pass occupies residues 241–266; the sequence is ATLTILLGIFFLCWGPFFLHLTLVVF. Over 267–279 the chain is Extracellular; the sequence is CPQHLTCSCIFKN. Residues 280–300 form a helical membrane-spanning segment; the sequence is FKVFLTLIICNTIIDPLIYAF. Residues 301 to 317 are Cytoplasmic-facing; that stretch reads RSQELRRTLKEVLLCSW. Cysteine 315 is lipidated: S-palmitoyl cysteine.

It belongs to the G-protein coupled receptor 1 family. Interacts with MGRN1, but does not undergo MGRN1-mediated ubiquitination; this interaction competes with GNAS-binding and thus inhibits agonist-induced cAMP production. Interacts with OPN3; the interaction results in a decrease in MC1R-mediated cAMP signaling and ultimately a decrease in melanin production in melanocytes.

The protein resides in the cell membrane. Receptor for MSH (alpha, beta and gamma) and ACTH. The activity of this receptor is mediated by G proteins which activate adenylate cyclase. Mediates melanogenesis, the production of eumelanin (black/brown) and phaeomelanin (red/yellow), via regulation of cAMP signaling in melanocytes. This chain is Melanocyte-stimulating hormone receptor (MC1R), found in Saguinus oedipus (Cotton-top tamarin).